The following is a 192-amino-acid chain: Peptide deformylase 1 (192 aa).

Fe cation is bound by residues C101 and H143. E144 is an active-site residue. H147 lines the Fe cation pocket.

Belongs to the polypeptide deformylase family. Requires Fe(2+) as cofactor.

The enzyme catalyses N-terminal N-formyl-L-methionyl-[peptide] + H2O = N-terminal L-methionyl-[peptide] + formate. In terms of biological role, removes the formyl group from the N-terminal Met of newly synthesized proteins. Requires at least a dipeptide for an efficient rate of reaction. N-terminal L-methionine is a prerequisite for activity but the enzyme has broad specificity at other positions. This Prochlorococcus marinus (strain MIT 9313) protein is Peptide deformylase 1.